A 706-amino-acid chain; its full sequence is Ribosomal RNA large subunit methyltransferase K/L (706 aa).

The region spanning 43–154 (LMYQSLLWSR…RDMASVALDL (112 aa)) is the THUMP domain.

The protein belongs to the methyltransferase superfamily. RlmKL family.

The protein resides in the cytoplasm. The enzyme catalyses guanosine(2445) in 23S rRNA + S-adenosyl-L-methionine = N(2)-methylguanosine(2445) in 23S rRNA + S-adenosyl-L-homocysteine + H(+). It carries out the reaction guanosine(2069) in 23S rRNA + S-adenosyl-L-methionine = N(2)-methylguanosine(2069) in 23S rRNA + S-adenosyl-L-homocysteine + H(+). Functionally, specifically methylates the guanine in position 2445 (m2G2445) and the guanine in position 2069 (m7G2069) of 23S rRNA. In Yersinia pseudotuberculosis serotype IB (strain PB1/+), this protein is Ribosomal RNA large subunit methyltransferase K/L.